Reading from the N-terminus, the 349-residue chain is Protein-glutamate methylesterase/protein-glutamine glutaminase 1 (349 aa).

The region spanning 2 to 119 is the Response regulatory domain; that stretch reads RTLIVDDSAF…DVNKAEKELV (118 aa). The residue at position 53 (Asp-53) is a 4-aspartylphosphate. Positions 158-345 constitute a CheB-type methylesterase domain; it reads ILIGSSTGGP…EEIVKRLEAK (188 aa). Residues Ser-163, His-190, and Asp-287 contribute to the active site.

The protein belongs to the CheB family. In terms of processing, phosphorylated by CheA. Phosphorylation of the N-terminal regulatory domain activates the methylesterase activity.

It localises to the cytoplasm. It carries out the reaction [protein]-L-glutamate 5-O-methyl ester + H2O = L-glutamyl-[protein] + methanol + H(+). The enzyme catalyses L-glutaminyl-[protein] + H2O = L-glutamyl-[protein] + NH4(+). Its function is as follows. Involved in chemotaxis. Part of a chemotaxis signal transduction system that modulates chemotaxis in response to various stimuli. Catalyzes the demethylation of specific methylglutamate residues introduced into the chemoreceptors (methyl-accepting chemotaxis proteins or MCP) by CheR. Also mediates the irreversible deamidation of specific glutamine residues to glutamic acid. The chain is Protein-glutamate methylesterase/protein-glutamine glutaminase 1 from Methanosarcina acetivorans (strain ATCC 35395 / DSM 2834 / JCM 12185 / C2A).